A 173-amino-acid polypeptide reads, in one-letter code: Regulatory protein RecX (173 aa).

This sequence belongs to the RecX family.

It localises to the cytoplasm. Modulates RecA activity. The polypeptide is Regulatory protein RecX (Mycobacterium marinum (strain ATCC BAA-535 / M)).